Consider the following 150-residue polypeptide: Probable deoxyuridine 5'-triphosphate nucleotidohydrolase (150 aa).

The protein belongs to the dCTP deaminase family. Archaeal dUTPase subfamily.

It catalyses the reaction dUTP + H2O = dUMP + diphosphate + H(+). Its pathway is pyrimidine metabolism; dUMP biosynthesis; dUMP from dCTP (dUTP route): step 2/2. In terms of biological role, this enzyme is involved in nucleotide metabolism: it produces dUMP, the immediate precursor of thymidine nucleotides and it decreases the intracellular concentration of dUTP so that uracil cannot be incorporated into DNA. In Methanothermobacter thermautotrophicus (strain ATCC 29096 / DSM 1053 / JCM 10044 / NBRC 100330 / Delta H) (Methanobacterium thermoautotrophicum), this protein is Probable deoxyuridine 5'-triphosphate nucleotidohydrolase.